The chain runs to 122 residues: uncharacterized protein (122 aa).

This is an uncharacterized protein from Caenorhabditis elegans.